Here is a 190-residue protein sequence, read N- to C-terminus: MKLVIGLGNPESKYSGTRHNVGFDVIDRLSESFQIPFTAGKGKYHFAKINWRNTAIVLLKPMTYMNLSGHAVVAAMNFYKIQRQDILVICDDLNLPSGTLRLRAKGSAGGQNGLKHIIECLGNDEFARMRVGIRLEDQPLSSFSSFVLGKFSEDEKKTMEKILPVCADAALDFSVNGIEHAMNHYNKPAA.

Y14 serves as a coordination point for tRNA. Residue H19 is the Proton acceptor of the active site. Residues Y64, N66, and N112 each coordinate tRNA.

Belongs to the PTH family. In terms of assembly, monomer.

It is found in the cytoplasm. The enzyme catalyses an N-acyl-L-alpha-aminoacyl-tRNA + H2O = an N-acyl-L-amino acid + a tRNA + H(+). In terms of biological role, hydrolyzes ribosome-free peptidyl-tRNAs (with 1 or more amino acids incorporated), which drop off the ribosome during protein synthesis, or as a result of ribosome stalling. Catalyzes the release of premature peptidyl moieties from peptidyl-tRNA molecules trapped in stalled 50S ribosomal subunits, and thus maintains levels of free tRNAs and 50S ribosomes. The chain is Peptidyl-tRNA hydrolase from Chlorobium limicola (strain DSM 245 / NBRC 103803 / 6330).